The chain runs to 202 residues: Holliday junction branch migration complex subunit RuvA (202 aa).

Residues 1-63 (MIEYLKGAIV…EDAHLLYGFS (63 aa)) are domain I. The interval 64–142 (TKEERTLFGQ…LETSSDEILS (79 aa)) is domain II. Positions 143 to 153 (ARTAVGDAALN) are flexible linker. A domain III region spans residues 153–202 (NTIASGEEAISALKMLGFADPAIRKAVKSILSEDSSLAVEDIIKRALRML).

The protein belongs to the RuvA family. As to quaternary structure, homotetramer. Forms an RuvA(8)-RuvB(12)-Holliday junction (HJ) complex. HJ DNA is sandwiched between 2 RuvA tetramers; dsDNA enters through RuvA and exits via RuvB. An RuvB hexamer assembles on each DNA strand where it exits the tetramer. Each RuvB hexamer is contacted by two RuvA subunits (via domain III) on 2 adjacent RuvB subunits; this complex drives branch migration. In the full resolvosome a probable DNA-RuvA(4)-RuvB(12)-RuvC(2) complex forms which resolves the HJ.

It localises to the cytoplasm. Its function is as follows. The RuvA-RuvB-RuvC complex processes Holliday junction (HJ) DNA during genetic recombination and DNA repair, while the RuvA-RuvB complex plays an important role in the rescue of blocked DNA replication forks via replication fork reversal (RFR). RuvA specifically binds to HJ cruciform DNA, conferring on it an open structure. The RuvB hexamer acts as an ATP-dependent pump, pulling dsDNA into and through the RuvAB complex. HJ branch migration allows RuvC to scan DNA until it finds its consensus sequence, where it cleaves and resolves the cruciform DNA. The protein is Holliday junction branch migration complex subunit RuvA of Porphyromonas gingivalis (strain ATCC BAA-308 / W83).